The following is a 239-amino-acid chain: Pyridoxine 5'-phosphate synthase (239 aa).

Residue N7 coordinates 3-amino-2-oxopropyl phosphate. D9 to H10 is a 1-deoxy-D-xylulose 5-phosphate binding site. 3-amino-2-oxopropyl phosphate is bound at residue R18. The active-site Proton acceptor is the H43. 1-deoxy-D-xylulose 5-phosphate is bound by residues R45 and H50. E70 functions as the Proton acceptor in the catalytic mechanism. T100 contributes to the 1-deoxy-D-xylulose 5-phosphate binding site. The active-site Proton donor is H191. Residues G192 and G213 to H214 contribute to the 3-amino-2-oxopropyl phosphate site.

The protein belongs to the PNP synthase family. Homooctamer; tetramer of dimers.

It is found in the cytoplasm. It carries out the reaction 3-amino-2-oxopropyl phosphate + 1-deoxy-D-xylulose 5-phosphate = pyridoxine 5'-phosphate + phosphate + 2 H2O + H(+). It participates in cofactor biosynthesis; pyridoxine 5'-phosphate biosynthesis; pyridoxine 5'-phosphate from D-erythrose 4-phosphate: step 5/5. In terms of biological role, catalyzes the complicated ring closure reaction between the two acyclic compounds 1-deoxy-D-xylulose-5-phosphate (DXP) and 3-amino-2-oxopropyl phosphate (1-amino-acetone-3-phosphate or AAP) to form pyridoxine 5'-phosphate (PNP) and inorganic phosphate. In Trichlorobacter lovleyi (strain ATCC BAA-1151 / DSM 17278 / SZ) (Geobacter lovleyi), this protein is Pyridoxine 5'-phosphate synthase.